We begin with the raw amino-acid sequence, 222 residues long: Protein MKS1 (222 aa).

Residues 1–61 are disordered; sequence MDPSEYFAGG…PNRDQPPPYI (61 aa). Residues 12-21 show a composition bias toward polar residues; it reads PSDQQNQKRQ. Phosphoserine is present on Ser30. The span at 37–46 shows a compositional bias: basic residues; the sequence is DSHKIKKPPK. Residues 47-61 are compositionally biased toward pro residues; sequence HPAPPPNRDQPPPYI. Ser72 bears the Phosphoserine mark. The VQ signature appears at 83 to 92; the sequence is FMNVVQRLTG. The interval 105 to 130 is disordered; it reads GDVSPAARLASTENASPRGGKEPAAR. Phosphoserine is present on residues Ser108 and Ser120.

Interacts with MPK4, WRKY25 and WRKY33. In terms of processing, phosphorylated on serine residue by MPK4.

The protein localises to the nucleus. Its function is as follows. Regulator of plant defense response. May contribute to MPK4-regulated defense activation by coupling the kinase to specific WRKY transcription factors. The sequence is that of Protein MKS1 (MKS1) from Arabidopsis thaliana (Mouse-ear cress).